Here is a 353-residue protein sequence, read N- to C-terminus: Chemerin-like receptor 2 (353 aa).

The Extracellular portion of the chain corresponds to 1-41 (MEVSREMLFEELDNYSYALEYYSQEPDAEENVYPGIVHWIS). A glycan (N-linked (GlcNAc...) asparagine) is linked at Asn14. Residues 42-62 (LLLYALAFVLGIPGNAIVIWF) form a helical membrane-spanning segment. Residues 63–73 (MGFKWKKTVTT) lie on the Cytoplasmic side of the membrane. The chain crosses the membrane as a helical span at residues 74–94 (LWFLNLAIADFVFVLFLPLYI). The Extracellular segment spans residues 95 to 112 (SYVALSFHWPFGRWLCKL). A disulfide bond links Cys110 and Cys187. Residues 113-133 (NSFIAQLNMFSSVFFLTVISL) traverse the membrane as a helical segment. At 134-154 (DRYIHLIHPGLSHPHRTLKNS) the chain is on the cytoplasmic side. Residues 155-175 (LLVVLFVWLLASLLGGPTLYF) form a helical membrane-spanning segment. Over 176–210 (RDTVEVNNRIICYNNFQEYELTLMRHHVLTWVKFL) the chain is Extracellular. Residues 211–231 (FGYLLPLLTMSSCYLCLIFKT) traverse the membrane as a helical segment. Over 232 to 247 (KKQNILISSKHLWMIL) the chain is Cytoplasmic. The helical transmembrane segment at 248 to 268 (SVVIAFMVCWTPFHLFSIWEL) threads the bilayer. The Extracellular segment spans residues 269–286 (SIHHNSSFQNVLQGGIPL). Residues 287 to 307 (STGLAFLNSCLNPILYVLISK) traverse the membrane as a helical segment. At 308-353 (KFQARFRASVAEVLKRSLWEASCSGTVSEQLRSAETKSLSLLETAQ) the chain is on the cytoplasmic side.

This sequence belongs to the chemokine-like receptor (CMKLR) family.

It is found in the cell membrane. Receptor for chemoattractant adipokine chemerin/RARRES2 suggesting a role for this receptor in the regulation of inflammation and energy homesotasis. Signals mainly via beta-arrestin pathway. Binding of RARRES2 activates weakly G proteins, calcium mobilization and MAPK1/MAPK3 (ERK1/2) phosphorylation too. Acts also as a receptor for TAFA1, mediates its effects on neuronal stem-cell proliferation and differentiation via the activation of ROCK/ERK and ROCK/STAT3 signaling pathway. This Rattus norvegicus (Rat) protein is Chemerin-like receptor 2 (Cmklr2).